Consider the following 205-residue polypeptide: MIGMLRGHVESVDAVSAIIEVGGVGYEVRMPSADLASMHAGQEIKVYTSLNVSQDAITLFGFGTLASKRMFLQLQKVSGIGPKVALSLLSTLPPDRLARAVADGDATALAKAPGLGKKGAQKIILELKGSIDLSQIEGSSATASTPEDTGAEQVVEGLMSLGWHQQDAAHAVQTVCADNQIETPLNAKDVPRVLKLALTSLDRGR.

The interval 1 to 63 is domain I; sequence MIGMLRGHVE…QDAITLFGFG (63 aa). The interval 64-142 is domain II; sequence TLASKRMFLQ…LSQIEGSSAT (79 aa). Residues 143-145 are flexible linker; the sequence is AST. Positions 146-205 are domain III; that stretch reads PEDTGAEQVVEGLMSLGWHQQDAAHAVQTVCADNQIETPLNAKDVPRVLKLALTSLDRGR.

The protein belongs to the RuvA family. Homotetramer. Forms an RuvA(8)-RuvB(12)-Holliday junction (HJ) complex. HJ DNA is sandwiched between 2 RuvA tetramers; dsDNA enters through RuvA and exits via RuvB. An RuvB hexamer assembles on each DNA strand where it exits the tetramer. Each RuvB hexamer is contacted by two RuvA subunits (via domain III) on 2 adjacent RuvB subunits; this complex drives branch migration. In the full resolvosome a probable DNA-RuvA(4)-RuvB(12)-RuvC(2) complex forms which resolves the HJ.

The protein resides in the cytoplasm. Functionally, the RuvA-RuvB-RuvC complex processes Holliday junction (HJ) DNA during genetic recombination and DNA repair, while the RuvA-RuvB complex plays an important role in the rescue of blocked DNA replication forks via replication fork reversal (RFR). RuvA specifically binds to HJ cruciform DNA, conferring on it an open structure. The RuvB hexamer acts as an ATP-dependent pump, pulling dsDNA into and through the RuvAB complex. HJ branch migration allows RuvC to scan DNA until it finds its consensus sequence, where it cleaves and resolves the cruciform DNA. The protein is Holliday junction branch migration complex subunit RuvA of Bifidobacterium adolescentis (strain ATCC 15703 / DSM 20083 / NCTC 11814 / E194a).